A 188-amino-acid polypeptide reads, in one-letter code: Elongation factor P (188 aa).

This sequence belongs to the elongation factor P family.

Its subcellular location is the cytoplasm. It functions in the pathway protein biosynthesis; polypeptide chain elongation. In terms of biological role, involved in peptide bond synthesis. Stimulates efficient translation and peptide-bond synthesis on native or reconstituted 70S ribosomes in vitro. Probably functions indirectly by altering the affinity of the ribosome for aminoacyl-tRNA, thus increasing their reactivity as acceptors for peptidyl transferase. The protein is Elongation factor P of Wolbachia pipientis subsp. Culex pipiens (strain wPip).